Reading from the N-terminus, the 230-residue chain is Thymidylate kinase (230 aa).

Residue 23–30 (GIDGAGKT) participates in ATP binding.

The protein belongs to the thymidylate kinase family.

The catalysed reaction is dTMP + ATP = dTDP + ADP. In terms of biological role, phosphorylation of dTMP to form dTDP in both de novo and salvage pathways of dTTP synthesis. This Ureaplasma parvum serovar 3 (strain ATCC 27815 / 27 / NCTC 11736) protein is Thymidylate kinase.